Consider the following 338-residue polypeptide: UDP-N-acetylglucosamine--N-acetylmuramyl-(pentapeptide) pyrophosphoryl-undecaprenol N-acetylglucosamine transferase (338 aa).

Residues threonine 10–glycine 12, asparagine 122, serine 177, and glutamine 275 each bind UDP-N-acetyl-alpha-D-glucosamine.

It belongs to the glycosyltransferase 28 family. MurG subfamily.

Its subcellular location is the cell inner membrane. It carries out the reaction di-trans,octa-cis-undecaprenyl diphospho-N-acetyl-alpha-D-muramoyl-L-alanyl-D-glutamyl-meso-2,6-diaminopimeloyl-D-alanyl-D-alanine + UDP-N-acetyl-alpha-D-glucosamine = di-trans,octa-cis-undecaprenyl diphospho-[N-acetyl-alpha-D-glucosaminyl-(1-&gt;4)]-N-acetyl-alpha-D-muramoyl-L-alanyl-D-glutamyl-meso-2,6-diaminopimeloyl-D-alanyl-D-alanine + UDP + H(+). It functions in the pathway cell wall biogenesis; peptidoglycan biosynthesis. In terms of biological role, cell wall formation. Catalyzes the transfer of a GlcNAc subunit on undecaprenyl-pyrophosphoryl-MurNAc-pentapeptide (lipid intermediate I) to form undecaprenyl-pyrophosphoryl-MurNAc-(pentapeptide)GlcNAc (lipid intermediate II). The protein is UDP-N-acetylglucosamine--N-acetylmuramyl-(pentapeptide) pyrophosphoryl-undecaprenol N-acetylglucosamine transferase of Sulfurovum sp. (strain NBC37-1).